Reading from the N-terminus, the 276-residue chain is S-adenosylmethionine decarboxylase proenzyme (276 aa).

S124 (schiff-base intermediate with substrate; via pyruvic acid) is an active-site residue. S124 is modified (pyruvic acid (Ser); by autocatalysis). H129 (proton acceptor; for processing activity) is an active-site residue. The active-site Proton donor; for catalytic activity is C152.

It belongs to the prokaryotic AdoMetDC family. Type 2 subfamily. Heterooctamer of four alpha and four beta chains arranged as a tetramer of alpha/beta heterodimers. The cofactor is pyruvate. Is synthesized initially as an inactive proenzyme. Formation of the active enzyme involves a self-maturation process in which the active site pyruvoyl group is generated from an internal serine residue via an autocatalytic post-translational modification. Two non-identical subunits are generated from the proenzyme in this reaction, and the pyruvate is formed at the N-terminus of the alpha chain, which is derived from the carboxyl end of the proenzyme. The post-translation cleavage follows an unusual pathway, termed non-hydrolytic serinolysis, in which the side chain hydroxyl group of the serine supplies its oxygen atom to form the C-terminus of the beta chain, while the remainder of the serine residue undergoes an oxidative deamination to produce ammonia and the pyruvoyl group blocking the N-terminus of the alpha chain.

The catalysed reaction is S-adenosyl-L-methionine + H(+) = S-adenosyl 3-(methylsulfanyl)propylamine + CO2. The protein operates within amine and polyamine biosynthesis; S-adenosylmethioninamine biosynthesis; S-adenosylmethioninamine from S-adenosyl-L-methionine: step 1/1. Functionally, catalyzes the decarboxylation of S-adenosylmethionine to S-adenosylmethioninamine (dcAdoMet), the propylamine donor required for the synthesis of the polyamines spermine and spermidine from the diamine putrescine. This chain is S-adenosylmethionine decarboxylase proenzyme, found in Desulfitobacterium hafniense (strain Y51).